The sequence spans 44 residues: uncharacterized protein (44 aa).

Positions 1 to 16 are cleaved as a signal peptide; the sequence is MRISLLAVILALLFVA.

This is an uncharacterized protein from Helicobacter pylori (strain ATCC 700392 / 26695) (Campylobacter pylori).